Reading from the N-terminus, the 30-residue chain is Elongation factor 1-delta (30 aa).

It belongs to the EF-1-beta/EF-1-delta family. As to quaternary structure, EF-1 is composed of 4 subunits: alpha, beta (1B-alpha=beta'), delta (1B-beta), and gamma (1B-gamma).

Functionally, EF-1-beta and EF-1-delta stimulate the exchange of GDP bound to EF-1-alpha to GTP. This Populus euphratica (Euphrates poplar) protein is Elongation factor 1-delta.